Here is a 97-residue protein sequence, read N- to C-terminus: Protein Vpr (97 aa).

The tract at residues 1-42 is homooligomerization; it reads MEQAPEDQGPQREPYNEWTLELLEELKREAVRHFPRPWLHSL. Phosphoserine; by host is present on residues Ser79, Ser95, and Ser97.

The protein belongs to the HIV-1 VPR protein family. Homooligomer, may form homodimer. Interacts with p6-gag region of the Pr55 Gag precursor protein through a (Leu-X-X)4 motif near the C-terminus of the P6gag protein. Interacts with host UNG. May interact with host RAD23A/HHR23A. Interacts with host VPRBP/DCAF1, leading to hijack the CUL4A-RBX1-DDB1-DCAF1/VPRBP complex, mediating ubiquitination of host proteins such as TERT and ZGPAT and arrest of the cell cycle in G2 phase. Phosphorylated on several residues by host. These phosphorylations regulate VPR activity for the nuclear import of the HIV-1 pre-integration complex.

Its subcellular location is the virion. The protein localises to the host nucleus. The protein resides in the host extracellular space. Its function is as follows. During virus replication, may deplete host UNG protein, and incude G2-M cell cycle arrest. Acts by targeting specific host proteins for degradation by the 26S proteasome, through association with the cellular CUL4A-DDB1 E3 ligase complex by direct interaction with host VPRPB/DCAF-1. Cell cycle arrest reportedly occurs within hours of infection and is not blocked by antiviral agents, suggesting that it is initiated by the VPR carried into the virion. Additionally, VPR induces apoptosis in a cell cycle dependent manner suggesting that these two effects are mechanistically linked. Detected in the serum and cerebrospinal fluid of AIDS patient, VPR may also induce cell death to bystander cells. Functionally, during virus entry, plays a role in the transport of the viral pre-integration (PIC) complex to the host nucleus. This function is crucial for viral infection of non-dividing macrophages. May act directly at the nuclear pore complex, by binding nucleoporins phenylalanine-glycine (FG)-repeat regions. This Human immunodeficiency virus type 1 group M subtype B (isolate ARV2/SF2) (HIV-1) protein is Protein Vpr.